Consider the following 98-residue polypeptide: NADH-ubiquinone oxidoreductase chain 4L (98 aa).

3 helical membrane-spanning segments follow: residues 1–21 (MSLT…GLLL), 29–49 (SLLC…MVIL), and 61–81 (IILL…LVMV).

It belongs to the complex I subunit 4L family. As to quaternary structure, core subunit of respiratory chain NADH dehydrogenase (Complex I) which is composed of 45 different subunits.

The protein resides in the mitochondrion inner membrane. It catalyses the reaction a ubiquinone + NADH + 5 H(+)(in) = a ubiquinol + NAD(+) + 4 H(+)(out). Its function is as follows. Core subunit of the mitochondrial membrane respiratory chain NADH dehydrogenase (Complex I) which catalyzes electron transfer from NADH through the respiratory chain, using ubiquinone as an electron acceptor. Part of the enzyme membrane arm which is embedded in the lipid bilayer and involved in proton translocation. The protein is NADH-ubiquinone oxidoreductase chain 4L (MT-ND4L) of Platyrrhinus helleri (Heller's broad-nosed bat).